A 615-amino-acid polypeptide reads, in one-letter code: Membrane protein insertase YidC (615 aa).

5 helical membrane-spanning segments follow: residues 9–29 (LMFI…VLGP), 384–404 (LVGN…LVLY), 458–478 (LPML…TVTI), 516–536 (LIGA…FTMW), and 556–576 (WFPV…VIYW).

Belongs to the OXA1/ALB3/YidC family. Type 1 subfamily. As to quaternary structure, interacts with the Sec translocase complex via SecD. Specifically interacts with transmembrane segments of nascent integral membrane proteins during membrane integration.

The protein resides in the cell inner membrane. Its function is as follows. Required for the insertion and/or proper folding and/or complex formation of integral membrane proteins into the membrane. Involved in integration of membrane proteins that insert both dependently and independently of the Sec translocase complex, as well as at least some lipoproteins. Aids folding of multispanning membrane proteins. The protein is Membrane protein insertase YidC of Caulobacter vibrioides (strain ATCC 19089 / CIP 103742 / CB 15) (Caulobacter crescentus).